The chain runs to 139 residues: Sec-independent protein translocase protein TatB (139 aa).

A helical membrane pass occupies residues 1-21 (MFDMGFLELMLIGVVALLVLG). Basic and acidic residues predominate over residues 66–86 (QQRKLDAGLGKVRDEVERHGD). The disordered stretch occupies residues 66 to 139 (QQRKLDAGLG…APSAKDSNAP (74 aa)).

Belongs to the TatB family. In terms of assembly, the Tat system comprises two distinct complexes: a TatABC complex, containing multiple copies of TatA, TatB and TatC subunits, and a separate TatA complex, containing only TatA subunits. Substrates initially bind to the TatABC complex, which probably triggers association of the separate TatA complex to form the active translocon.

It is found in the cell inner membrane. Functionally, part of the twin-arginine translocation (Tat) system that transports large folded proteins containing a characteristic twin-arginine motif in their signal peptide across membranes. Together with TatC, TatB is part of a receptor directly interacting with Tat signal peptides. TatB may form an oligomeric binding site that transiently accommodates folded Tat precursor proteins before their translocation. This Chromohalobacter salexigens (strain ATCC BAA-138 / DSM 3043 / CIP 106854 / NCIMB 13768 / 1H11) protein is Sec-independent protein translocase protein TatB.